A 68-amino-acid polypeptide reads, in one-letter code: Adipokinetic prohormone type 1 (68 aa).

The signal sequence occupies residues 1–20 (MNKIYFVIVFVACFCLFAEA). Residue glutamine 21 is modified to Pyrrolidone carboxylic acid. Position 30 is a glycine amide (glycine 30). The propeptide occupies 34–68 (SGVAPMSCKNEEAVATIFKLIQNEAERFIICQQKS).

As to expression, expressed in antennal lobe (AL), corpora cardiaca (CC), corpora allata (CA) and gnathal ganglion (GNG) (at protein level). Expression in CC and CA detected in all animals, expression in GNG in some animals and in AL in few animals (at protein level).

Its subcellular location is the secreted. This hormone, released from cells in the corpora cardiaca, causes release of diglycerides from the fat body and stimulation of muscles to use these diglycerides as an energy source during energy-demanding processes. This is Adipokinetic prohormone type 1 from Agrotis ipsilon (Black cutworm moth).